The sequence spans 310 residues: Protein translocase subunit SecF (310 aa).

Helical transmembrane passes span 18-38, 135-155, 162-182, 188-208, 240-260, and 267-287; these read FFTISGLLLLLTVGAFIYRGG, QAVYAFLFAFLVMIVYVAFRF, IVSVVGIIHDIVISLGFVILA, ITIVAALLTVVGYSINDTIVL, IVTSLTVFIVACSLFFFGGEV, and IMIIGTVLGVFSTIFVCAPLI.

It belongs to the SecD/SecF family. SecF subfamily. Forms a complex with SecD. Part of the essential Sec protein translocation apparatus which comprises SecA, SecYEG and auxiliary proteins SecDF. Other proteins may also be involved.

It localises to the cell inner membrane. Functionally, part of the Sec protein translocase complex. Interacts with the SecYEG preprotein conducting channel. SecDF uses the proton motive force (PMF) to complete protein translocation after the ATP-dependent function of SecA. This is Protein translocase subunit SecF from Endomicrobium trichonymphae.